A 684-amino-acid polypeptide reads, in one-letter code: MVQKYESPVRIYKYPFELVVAGFRNFCRQKSVLRRGKVCEMGSIFGEAKTTTNTWCIRRWSFAVVCKKIIIEEFLFLFVKHQLYQYLCNHIVNIEYAYHKPYNSFATRVEIFEKCRYYAHPENPDWTCFDQTATLDIKNFFGIEHSMEKMGMKQYTQTTLKGKEIIEFFVNELKQEGITHVDRWVDDATVTSTTAGAATNTTPPEKPPLCRDNSILDADYIAKYLGQLTPLQESKLVQLRKRFEHGTSEHPEPDYQTLLRFLRARDFSIDKATGMLQESLQWRKEQRIDSILGEYKTPAVVEKYFPGGWHHHDKDGRPLYILRLGTMDVKGLLKSVGEDELLKLTLHICEEGLRLMKEATKLFGKPVWNWCLLVDLDGLSMRHLWRPGVKALLRIIETVETNYPETMGRVLIVRAPRVFPVLWTIVSTFIDENTRSKFLFFGGPDCMHAEDGIEQYIDTDKIPSFLGGSCNVIDCPIVALPNSVCVNRPVSSSSFDSSIVKLSPPPALSPHAFCSVATAIAYSLHFATLNGGIAHDHHGLYKAVDLKPGQLFELLIRNTDPKSVLTWDFEVLKNDTLFAVFHTEKEIEQSGNDDFSSVFDGPDFKEGTNYKKIEQSVKCRPKEGVQGSHEMASTGTYVLQWMCPPSCDGPAQLMYFHEILSSANYKGSMTSLQSGFSSNSLQSR.

The PRELI/MSF1 domain maps to 2-178 (VQKYESPVRI…FVNELKQEGI (177 aa)). The region spanning 297–474 (TPAVVEKYFP…FLGGSCNVID (178 aa)) is the CRAL-TRIO domain. One can recognise a GOLD domain in the interval 537–684 (HHGLYKAVDL…GFSSNSLQSR (148 aa)).

It is found in the mitochondrion. This chain is Protein real-time, found in Anopheles gambiae (African malaria mosquito).